The primary structure comprises 794 residues: Zinc finger and BTB domain-containing protein 17 (794 aa).

In terms of domain architecture, BTB spans M1–I104. The segment at E116 to D285 is disordered. Basic and acidic residues predominate over residues G132 to A142. Over residues S203–S216 the composition is skewed to low complexity. Residues V243 to N252 show a composition bias toward basic and acidic residues. Positions E254–A263 are enriched in acidic residues. An interaction with MYC region spans residues E260–C299. C2H2-type zinc fingers lie at residues H297 to H319, F325 to H347, Y353 to H375, Y381 to H403, Y409 to H431, H437 to H459, L465 to H487, Y493 to H515, K519 to H543, Y549 to H571, H577 to H599, Y605 to H628, and Y708 to H730. Residue K388 forms a Glycyl lysine isopeptide (Lys-Gly) (interchain with G-Cter in ubiquitin) linkage. K472 is covalently cross-linked (Glycyl lysine isopeptide (Lys-Gly) (interchain with G-Cter in ubiquitin)). The tract at residues H628–A709 is interaction with MYC. An interaction with HCFC1 region spans residues H628–E794. Residues P769–E794 are disordered. Residues P784–E794 are compositionally biased toward pro residues.

Belongs to the krueppel C2H2-type zinc-finger protein family. As to quaternary structure, homooligomerizes (via the BTB/POZ domain), multimerization is required for DNA binding. Binds to the C-terminal helix-loop-helix motif of MYC which inhibits ZBTB17 transactivation and growth arrest activities and renders it insoluble in the nucleus. Also interacts with HCFC1, MAGEA4 and TMPRSS11A. Interacts (via the C-terminal zinc fingers) with GFI1; the interaction results in the recruitment of MYC to the CDKN1A/p21 and CDKN1B promoters and repression of transcription. Interacts with TRAF2, interfering with the binding of UBC13 to TRAF2, and inhibiting TRAF2 E3 ligase activity. Interacts with BCL6; the interaction inhibits ZBTB17 transactivation activity on target genes involved in cell cycle arrest. Interacts with ZBTB49; this interaction blocks ZBTB17-mediated repression of RB1. Undergoes 'Lys-48'-linked polyubiquitination at Lys-388 and Lys-472 and subsequent proteasomal degradation in a TRAF2-dependent manner and upon TNFA stimulation. In terms of tissue distribution, found in all the embryonic and adult tissues examined.

It is found in the nucleus. Its function is as follows. Transcription factor that can function as an activator or repressor depending on its binding partners, and by targeting negative regulators of cell cycle progression. Has been shown to bind to the promoters of adenovirus major late protein and cyclin D1 and activate transcription. Required for early embryonic development during gastrulation. Plays a critical role in early lymphocyte development, where it is essential to prevent apoptosis in lymphoid precursors, allowing them to survive in response to IL7 and undergo proper lineage commitment. Represses RB1 transcription; this repression can be blocked by interaction with ZBTB49. The protein is Zinc finger and BTB domain-containing protein 17 (Zbtb17) of Mus musculus (Mouse).